Reading from the N-terminus, the 226-residue chain is Ribonuclease HII (226 aa).

The region spanning Gly-29–Asn-220 is the RNase H type-2 domain. Positions 35, 36, and 129 each coordinate a divalent metal cation.

The protein belongs to the RNase HII family. The cofactor is Mn(2+). Mg(2+) is required as a cofactor.

The protein localises to the cytoplasm. It carries out the reaction Endonucleolytic cleavage to 5'-phosphomonoester.. In terms of biological role, endonuclease that specifically degrades the RNA of RNA-DNA hybrids. The protein is Ribonuclease HII of Rhodococcus opacus (strain B4).